Here is a 775-residue protein sequence, read N- to C-terminus: Kojibiose phosphorylase (775 aa).

Residue 361 to 362 coordinates substrate; that stretch reads WD. Glu501 (proton donor) is an active-site residue. 614–615 provides a ligand contact to substrate; the sequence is KQ.

The protein belongs to the glycosyl hydrolase 65 family. Homohexamer.

It catalyses the reaction kojibiose + phosphate = beta-D-glucose 1-phosphate + D-glucose. Its activity is regulated as follows. Inhibited by Hg(2+) and Pb(2+). Functionally, catalyzes the reversible phosphorolysis of kojibiose into beta-D-glucose 1-phosphate (Glc1P) and D-glucose. Can act with alpha-1,2-oligoglucans, such as selaginose, but more slowly. Inactive when disaccharides with linkages other than alpha-1,2 linkages, such as sophorose, trehalose, neotrehalose, nigerose, laminaribiose, maltose, cellobiose, isomaltose, gentiobiose, sucrose and lactose, are used as substrates. In contrast, shows broad specificity for the reverse reaction. Various monosaccharides and disaccharides having a glucosyl residue at the non-reducing end are effective acceptors. The sequence is that of Kojibiose phosphorylase from Thermoanaerobacter brockii (Thermoanaerobium brockii).